We begin with the raw amino-acid sequence, 487 residues long: MVEEGTMERLRTLGTLGTGIGWRPEIADAVERMPGIDWVEAVAENVCPGHLPESLLRLRARGVTVVPHGVSLGLGGADRPDEGRLAALAERAEALGSPLVTEHIAFVRAGGALTASPLLEAGHLLPVPRTRDALDVLCENVRIAQAALPVPLAVENIAALISWPGEEMTEGQFLYDLVERTGVRLLIDVANLHTNHVNRGEDPAKALDELPVEAIAYVHVAGGFERDGVWHDSHAHPVPQPVLDILADLASRTTPPGVLLERDENFPEPGELERELGAIRKTLEKAGTRAGASAGAAGAATRTAAELTVAESTAVGAIAGPRRGGADAQAAPRAAGTEALSAASTSTPADPARQRLALAQAALLSALVAGTPVPEGFDRVRLGVQARALAAKRADVVAKVAPELPEILAEEYRPAFLTYAPGHPMTGGYRRDALDFAEHLLLAGRPEDAEARRRLRDWWLERSGPTPPSRHPAARLARATRRVLLRR.

The UPF0276 stretch occupies residues 1–285 (MVEEGTMERL…LGAIRKTLEK (285 aa)). The interval 286–487 (AGTRAGASAG…RATRRVLLRR (202 aa)) is unknown. The segment at 319–348 (AGPRRGGADAQAAPRAAGTEALSAASTSTP) is disordered. Residues 326 to 348 (ADAQAAPRAAGTEALSAASTSTP) show a composition bias toward low complexity.

This sequence in the N-terminal section; belongs to the UPF0276 family.

The sequence is that of UPF0276 protein SAV_2218 from Streptomyces avermitilis (strain ATCC 31267 / DSM 46492 / JCM 5070 / NBRC 14893 / NCIMB 12804 / NRRL 8165 / MA-4680).